A 416-amino-acid chain; its full sequence is Glutamyl-tRNA reductase (416 aa).

Substrate is bound by residues 49–52, Ser105, 110–112, and Gln116; these read TCNR and EPQ. Catalysis depends on Cys50, which acts as the Nucleophile. Residue 185–190 coordinates NADP(+); the sequence is GAGETI.

This sequence belongs to the glutamyl-tRNA reductase family. As to quaternary structure, homodimer.

It carries out the reaction (S)-4-amino-5-oxopentanoate + tRNA(Glu) + NADP(+) = L-glutamyl-tRNA(Glu) + NADPH + H(+). Its pathway is porphyrin-containing compound metabolism; protoporphyrin-IX biosynthesis; 5-aminolevulinate from L-glutamyl-tRNA(Glu): step 1/2. In terms of biological role, catalyzes the NADPH-dependent reduction of glutamyl-tRNA(Glu) to glutamate 1-semialdehyde (GSA). The chain is Glutamyl-tRNA reductase from Shewanella frigidimarina (strain NCIMB 400).